The sequence spans 180 residues: Inner membrane-spanning protein YciB (180 aa).

Helical transmembrane passes span Q25–I45, V49–I69, I76–I96, I118–V138, and F150–L170.

The protein belongs to the YciB family.

The protein localises to the cell inner membrane. In terms of biological role, plays a role in cell envelope biogenesis, maintenance of cell envelope integrity and membrane homeostasis. This is Inner membrane-spanning protein YciB from Rickettsia felis (strain ATCC VR-1525 / URRWXCal2) (Rickettsia azadi).